Reading from the N-terminus, the 230-residue chain is Ureidoacrylate amidohydrolase RutB (230 aa).

The active-site Proton acceptor is the Asp-24. Lys-133 is a catalytic residue. Cys-166 acts as the Nucleophile in catalysis.

The protein belongs to the isochorismatase family. RutB subfamily.

It carries out the reaction (Z)-3-ureidoacrylate + H2O + H(+) = (Z)-3-aminoacrylate + NH4(+) + CO2. It catalyses the reaction (Z)-3-ureidoacrylate + H2O = (Z)-3-aminoacrylate + carbamate + H(+). The catalysed reaction is (Z)-2-methylureidoacrylate + H2O + H(+) = (Z)-2-methylaminoacrylate + NH4(+) + CO2. Functionally, hydrolyzes ureidoacrylate to form aminoacrylate and carbamate. The carbamate hydrolyzes spontaneously, thereby releasing one of the nitrogen atoms of the pyrimidine ring as ammonia and one of its carbon atoms as CO2. The polypeptide is Ureidoacrylate amidohydrolase RutB (Escherichia coli O127:H6 (strain E2348/69 / EPEC)).